Reading from the N-terminus, the 138-residue chain is MRTLWIVAVLLLGVEGSLVQFEMMIMEVAKRSGLLWYSAYGCYCGWGGHGRPQDATDRCCFVHDCCYGKATDCNPKRVSYTYSEENGEIVCGGDDPCGTQICECDKAAAICFRDNIPSYDNKYWLFPPKNCQEEPEPC.

The N-terminal stretch at 1-16 is a signal peptide; sequence MRTLWIVAVLLLGVEG. Disulfide bonds link cysteine 42–cysteine 131, cysteine 44–cysteine 60, cysteine 59–cysteine 111, cysteine 65–cysteine 138, cysteine 66–cysteine 104, cysteine 73–cysteine 97, and cysteine 91–cysteine 102. Ca(2+)-binding residues include tyrosine 43, glycine 45, and glycine 47. Histidine 63 is an active-site residue. Aspartate 64 contributes to the Ca(2+) binding site. The active site involves aspartate 105.

It belongs to the phospholipase A2 family. Group II subfamily. D49 sub-subfamily. Ca(2+) serves as cofactor. As to expression, expressed by the venom gland.

The protein localises to the secreted. The enzyme catalyses a 1,2-diacyl-sn-glycero-3-phosphocholine + H2O = a 1-acyl-sn-glycero-3-phosphocholine + a fatty acid + H(+). In terms of biological role, snake venom phospholipase A2 (PLA2) that shows high lipolytic and weak ADP-induced platelet aggregation activities. Also shows weak anticoagulant activity. PLA2 catalyzes the calcium-dependent hydrolysis of the 2-acyl groups in 3-sn-phosphoglycerides. This chain is Acidic phospholipase A2 CH-E6', found in Crotalus horridus (Timber rattlesnake).